The chain runs to 1142 residues: E3 ubiquitin-protein ligase TRIM33 (1142 aa).

The segment covering 1-18 has biased composition (gly residues); that stretch reads MAENKGGGEAESGGGGSG. A disordered region spans residues 1 to 132; the sequence is MAENKGGGEA…PGSSSGPPLG (132 aa). Positions 1–163 are necessary for E3 ubiquitin-protein ligase activity and repression of SMAD4 signaling and transcriptional repression; it reads MAENKGGGEA…AEPKLLPCLH (163 aa). Residues 19 to 42 show a composition bias toward low complexity; sequence SAPVTAGAAGPTAQEAEPPLAAVL. Residues 52-64 show a composition bias toward gly residues; sequence RAGAEGGAAGPDD. The segment covering 65 to 99 has biased composition (low complexity); the sequence is GGVAAASSSSAPAASVPAASVGSAVPGGAASTPAP. The span at 100–122 shows a compositional bias: pro residues; that stretch reads AAAPAPAPAPAPAPAPAPAPAPA. The RING-type zinc-finger motif lies at 141 to 201; that stretch reads CAVCQQSLQS…VGVIRCPVCR (61 aa). B box-type zinc fingers lie at residues 228-275 and 287-328; these read KSEQ…IRKK and QRPV…YQFL. Zn(2+) is bound by residues Cys-233, Cys-236, Cys-257, His-261, Cys-292, His-295, Cys-315, and His-320. Residues 315–417 form a necessary for oligomerization region; sequence CQLLEHKEHR…QMKLLQQQND (103 aa). A coiled-coil region spans residues 315–417; the sequence is CQLLEHKEHR…QMKLLQQQND (103 aa). Residues Lys-345, Lys-350, Lys-497, and Lys-520 each participate in a glycyl lysine isopeptide (Lys-Gly) (interchain with G-Cter in SUMO2) cross-link. Asymmetric dimethylarginine; alternate is present on Arg-531. Position 531 is an omega-N-methylarginine; alternate (Arg-531). Residue Lys-543 forms a Glycyl lysine isopeptide (Lys-Gly) (interchain with G-Cter in SUMO2) linkage. Position 551 is an omega-N-methylarginine (Arg-551). At Arg-593 the chain carries Asymmetric dimethylarginine. Residue Arg-607 is modified to Asymmetric dimethylarginine; alternate. An Omega-N-methylarginine; alternate modification is found at Arg-607. 2 positions are modified to asymmetric dimethylarginine: Arg-614 and Arg-620. 3 disordered regions span residues 657–676, 688–707, and 718–834; these read PTSP…TSPS, NPEN…EDAG, and YISG…PPLS. Over residues 738–774 the composition is skewed to low complexity; the sequence is PSALSPGSSGLSNSHTPVRPPSTSSTGSRGSCGSSGR. Basic and acidic residues-rich tracts occupy residues 775-794 and 808-817; these read TAEK…KQEP and KQEKTEDGRR. N6-acetyllysine; alternate is present on residues Lys-778 and Lys-784. Residues Lys-778 and Lys-784 each participate in a glycyl lysine isopeptide (Lys-Gly) (interchain with G-Cter in SUMO2); alternate cross-link. Lys-789 is covalently cross-linked (Glycyl lysine isopeptide (Lys-Gly) (interchain with G-Cter in SUMO2)). Glycyl lysine isopeptide (Lys-Gly) (interchain with G-Cter in SUMO2); alternate cross-links involve residues Lys-791 and Lys-808. Glycyl lysine isopeptide (Lys-Gly) (interchain with G-Cter in SUMO1); alternate cross-links involve residues Lys-791 and Lys-808. Lys-808 carries the post-translational modification N6-acetyllysine; alternate. Lys-811 is covalently cross-linked (Glycyl lysine isopeptide (Lys-Gly) (interchain with G-Cter in SUMO2)). The residue at position 818 (Ser-818) is a Phosphoserine. A compositionally biased stretch (low complexity) spans 822 to 834; sequence LSSPESSLTPPLS. Residue Thr-830 is modified to Phosphothreonine. Lys-876 is covalently cross-linked (Glycyl lysine isopeptide (Lys-Gly) (interchain with G-Cter in SUMO2)). Ser-877 is modified (phosphoserine). The PHD-type zinc finger occupies 902 to 949; sequence EDWCAVCQNGGDLLCCEKCPKVFHLTCHVPTLLSFPSGDWICTFCRDI. The residue at position 966 (Lys-966) is an N6-acetyllysine. Residue Lys-968 is modified to N6-acetyllysine; alternate. Residue Lys-968 forms a Glycyl lysine isopeptide (Lys-Gly) (interchain with G-Cter in SUMO2); alternate linkage. One can recognise a Bromo domain in the interval 972–1095; the sequence is GLSPVDQRKC…LYFEDKLSEI (124 aa). Residues Lys-1022 and Lys-1058 each participate in a glycyl lysine isopeptide (Lys-Gly) (interchain with G-Cter in SUMO2) cross-link. Residue Thr-1066 is modified to Phosphothreonine. Residue Lys-1072 forms a Glycyl lysine isopeptide (Lys-Gly) (interchain with G-Cter in SUMO2) linkage. A disordered region spans residues 1103–1142; that stretch reads PLPEFEQDEDDGEVTEDSDEDFIQPRRKRLKSDERPVHIK. Residues 1107 to 1124 show a composition bias toward acidic residues; it reads FEQDEDDGEVTEDSDEDF. At Thr-1117 the chain carries Phosphothreonine. Ser-1120 bears the Phosphoserine mark. Lys-1133 participates in a covalent cross-link: Glycyl lysine isopeptide (Lys-Gly) (interchain with G-Cter in SUMO2). Residues 1133-1142 are compositionally biased toward basic and acidic residues; that stretch reads KSDERPVHIK. Ser-1134 carries the phosphoserine modification.

It belongs to the TRIM/RBCC family. As to quaternary structure, homooligomer and heterooligomer with TRIM24 and TRIM28 family members. Interacts with SMAD4 in unstimulated cells. Found in a complex with SMAD2 and SMAD3 upon addition of TGF-beta. Interacts with SMAD2 and SMAD3. Interacts with SMAD4 under basal and induced conditions and, upon TGF-beta signaling, with activated SMAD2. Forms a ternary complex with SMAD4 and SMAD2 upon TGF-beta signaling. In terms of processing, sumoylated with SUMO1. In terms of tissue distribution, ubiquitous with high level in testis.

The protein resides in the nucleus. The enzyme catalyses S-ubiquitinyl-[E2 ubiquitin-conjugating enzyme]-L-cysteine + [acceptor protein]-L-lysine = [E2 ubiquitin-conjugating enzyme]-L-cysteine + N(6)-ubiquitinyl-[acceptor protein]-L-lysine.. The protein operates within protein modification; protein ubiquitination. Acts as an E3 ubiquitin-protein ligase. Promotes SMAD4 ubiquitination, nuclear exclusion and degradation via the ubiquitin proteasome pathway. May act as a transcriptional repressor. Inhibits the transcriptional response to TGF-beta/BMP signaling cascade. Plays a role in the control of cell proliferation. Its association with SMAD2 and SMAD3 stimulates erythroid differentiation of hematopoietic stem/progenitor. Monoubiquitinates SMAD4 and acts as an inhibitor of SMAD4-dependent TGF-beta/BMP signaling cascade (Monoubiquitination of SMAD4 hampers its ability to form a stable complex with activated SMAD2/3 resulting in inhibition of TGF-beta/BMP signaling cascade). The protein is E3 ubiquitin-protein ligase TRIM33 (Trim33) of Mus musculus (Mouse).